The chain runs to 857 residues: Autoinducer 2 sensor kinase/phosphatase LuxQ (857 aa).

The next 2 helical transmembrane spans lie at 14–34 (IASF…VSVL) and 283–303 (FWMA…RWWL). One can recognise a Histidine kinase domain in the interval 486 to 706 (KMSHELRTPL…RFEIQLPIEL (221 aa)). Residue H489 is modified to Phosphohistidine; by autocatalysis. The Response regulatory domain occupies 731-846 (RVLLVEDNHT…TLHKALEHFK (116 aa)). D780 is subject to 4-aspartylphosphate.

As to quaternary structure, binds the complex formed by AI-2 and LuxP.

The protein resides in the cell inner membrane. The enzyme catalyses ATP + protein L-histidine = ADP + protein N-phospho-L-histidine.. Functionally, at low cell density, in absence of AI-2 (autoinducer 2), LuxQ has a kinase activity and autophosphorylates on a histidine residue. The phosphoryl group is then transferred to an aspartate residue in the response regulator domain. The phosphoryl group is transferred to LuxU, and ultimately to LuxO. At high cell density, in the presence of AI-2, the kinase activity is inactivated, and the response regulator domain has a phosphatase activity. The protein is Autoinducer 2 sensor kinase/phosphatase LuxQ (luxQ) of Vibrio cholerae serotype O1 (strain ATCC 39315 / El Tor Inaba N16961).